Reading from the N-terminus, the 142-residue chain is uncharacterized protein (142 aa).

Residues 19–54 are disordered; the sequence is IHTTPHPHTPHHTHHTHTTPTPTPHPHTHTPTPERS. A compositionally biased stretch (basic residues) spans 26–35; sequence HTPHHTHHTH.

This is an uncharacterized protein from Saccharomyces cerevisiae (strain ATCC 204508 / S288c) (Baker's yeast).